The following is a 208-amino-acid chain: Small ribosomal subunit protein uS4 (208 aa).

The S4 RNA-binding domain maps to 95-157 (RRIDNVVYRA…DSLKKLIRSN (63 aa)).

The protein belongs to the universal ribosomal protein uS4 family. Part of the 30S ribosomal subunit. Contacts protein S5. The interaction surface between S4 and S5 is involved in control of translational fidelity.

In terms of biological role, one of the primary rRNA binding proteins, it binds directly to 16S rRNA where it nucleates assembly of the body of the 30S subunit. Its function is as follows. With S5 and S12 plays an important role in translational accuracy. This is Small ribosomal subunit protein uS4 from Borreliella burgdorferi (strain ATCC 35210 / DSM 4680 / CIP 102532 / B31) (Borrelia burgdorferi).